The chain runs to 321 residues: Ribosomal RNA small subunit methyltransferase H (321 aa).

Residues 43-45 (GGH), aspartate 63, phenylalanine 89, aspartate 110, and glutamine 117 each bind S-adenosyl-L-methionine. A disordered region spans residues 286–321 (HPAGKALRAGPRETRDNPRSRSAVLRVAERSERHAA). Basic and acidic residues-rich tracts occupy residues 295 to 304 (GPRETRDNPR) and 312 to 321 (VAERSERHAA).

The protein belongs to the methyltransferase superfamily. RsmH family.

It localises to the cytoplasm. The enzyme catalyses cytidine(1402) in 16S rRNA + S-adenosyl-L-methionine = N(4)-methylcytidine(1402) in 16S rRNA + S-adenosyl-L-homocysteine + H(+). Specifically methylates the N4 position of cytidine in position 1402 (C1402) of 16S rRNA. The polypeptide is Ribosomal RNA small subunit methyltransferase H (Acidithiobacillus ferrooxidans (strain ATCC 23270 / DSM 14882 / CIP 104768 / NCIMB 8455) (Ferrobacillus ferrooxidans (strain ATCC 23270))).